We begin with the raw amino-acid sequence, 49 residues long: DNA-directed RNA polymerase subunit Rpo12 (49 aa).

Cysteine 11, cysteine 27, and cysteine 30 together coordinate Zn(2+).

Belongs to the archaeal Rpo12/eukaryotic RPC10 RNA polymerase subunit family. As to quaternary structure, part of the RNA polymerase complex. Requires Zn(2+) as cofactor.

It is found in the cytoplasm. The enzyme catalyses RNA(n) + a ribonucleoside 5'-triphosphate = RNA(n+1) + diphosphate. DNA-dependent RNA polymerase (RNAP) catalyzes the transcription of DNA into RNA using the four ribonucleoside triphosphates as substrates. The protein is DNA-directed RNA polymerase subunit Rpo12 of Pyrococcus abyssi (strain GE5 / Orsay).